The sequence spans 246 residues: Uridylate kinase (246 aa).

Lys11 to Gly14 contacts ATP. Gly53 is a UMP binding site. 2 residues coordinate ATP: Gly54 and Arg58. UMP-binding positions include Asp73 and Thr134–Thr141. Positions 161, 167, and 170 each coordinate ATP.

It belongs to the UMP kinase family. As to quaternary structure, homohexamer.

The protein localises to the cytoplasm. It carries out the reaction UMP + ATP = UDP + ADP. Its pathway is pyrimidine metabolism; CTP biosynthesis via de novo pathway; UDP from UMP (UMPK route): step 1/1. Inhibited by UTP. In terms of biological role, catalyzes the reversible phosphorylation of UMP to UDP. In Leptospira borgpetersenii serovar Hardjo-bovis (strain JB197), this protein is Uridylate kinase.